Here is a 326-residue protein sequence, read N- to C-terminus: Beta-1,3-galactosyltransferase 1 (326 aa).

At 1–6 the chain is on the cytoplasmic side; that stretch reads MASKVS. The chain crosses the membrane as a helical; Signal-anchor for type II membrane protein span at residues 7-26; it reads CLYVLTVVCWASALWYLSIT. Residues 27-326 lie on the Lumenal side of the membrane; sequence RPTSSYTGSK…DMSSKKHLRC (300 aa). 2 N-linked (GlcNAc...) asparagine glycosylation sites follow: Asn-47 and Asn-151.

Belongs to the glycosyltransferase 31 family. The cofactor is Mn(2+).

It is found in the golgi apparatus membrane. It carries out the reaction an N-acetyl-beta-D-glucosaminyl derivative + UDP-alpha-D-galactose = a beta-D-galactosyl-(1-&gt;3)-N-acetyl-beta-D-glucosaminyl derivative + UDP + H(+). The enzyme catalyses a beta-D-GlcNAc-(1-&gt;3)-beta-D-Gal-(1-&gt;4)-beta-D-Glc-(1&lt;-&gt;1)-Cer(d18:1(4E)) + UDP-alpha-D-galactose = a beta-D-Gal-(1-&gt;3)-beta-D-GlcNAc-(1-&gt;3)-beta-D-Gal-(1-&gt;4)-beta-D-Glc-(1&lt;-&gt;1')-Cer(d18:1(4E)) + UDP + H(+). It participates in protein modification; protein glycosylation. Functionally, beta-1,3-galactosyltransferase that transfers galactose from UDP-galactose to substrates with a terminal beta-N-acetylglucosamine (beta-GlcNAc) residue. Involved in the biosynthesis of the carbohydrate moieties of glycolipids and glycoproteins. The polypeptide is Beta-1,3-galactosyltransferase 1 (B3GALT1) (Gorilla gorilla gorilla (Western lowland gorilla)).